Consider the following 412-residue polypeptide: Argininosuccinate synthase (412 aa).

ATP-binding positions include 10-18 (AYSGGLDTS) and Ala-36. Residues Tyr-87 and Ser-92 each contribute to the L-citrulline site. 115–123 (SHGATGKGN) contributes to the ATP binding site. L-aspartate is bound by residues Thr-119, Asn-123, and Asp-124. Residue Asn-123 coordinates L-citrulline. The L-citrulline site is built by Arg-127, Ser-180, Ser-189, Glu-270, and Tyr-282.

This sequence belongs to the argininosuccinate synthase family. In terms of assembly, homotetramer.

The catalysed reaction is L-citrulline + L-aspartate + ATP = 2-(N(omega)-L-arginino)succinate + AMP + diphosphate + H(+). It participates in amino-acid biosynthesis; L-arginine biosynthesis; L-arginine from L-ornithine and carbamoyl phosphate: step 2/3. It functions in the pathway nitrogen metabolism; urea cycle; (N(omega)-L-arginino)succinate from L-aspartate and L-citrulline: step 1/1. This Aedes aegypti (Yellowfever mosquito) protein is Argininosuccinate synthase.